Reading from the N-terminus, the 325-residue chain is Lactonase drp35 (325 aa).

Positions 46, 108, 110, 128, 131, 133, 136, 183, 234, and 235 each coordinate Ca(2+). The active-site Proton donor is the Asp234.

The protein belongs to the SMP-30/CGR1 family. The cofactor is Ca(2+).

The protein resides in the cytoplasm. Functionally, exhibits lactonase activity. Acts in cells with perturbed membrane integrity and is possibly related to the membrane homeostasis. This chain is Lactonase drp35 (drp35), found in Staphylococcus epidermidis (strain ATCC 35984 / DSM 28319 / BCRC 17069 / CCUG 31568 / BM 3577 / RP62A).